The primary structure comprises 464 residues: MRLWGGRFAGGPAEALARLSISVQFDWRLAPYDLLASKSHARVLHRAGLLDADELAAMLAALDELSDAVAQGRFRPTVEDEDVHTALERGLLERLGTLGGKLRAGRSRNDQVATDLRLYLRDSAREVAARLTELSHALVVLAEQHVDTPAPGMTHLQHAQPISFGHQLLAHVQAFVRDIDRLRDWDVRASVSALGAGALAGSSLPLDPQGVAAELGFDRAFANSLDAVSDRDFAAEFLFVAALIGVHLSRLGEEIVLWTTREFGWVELDDAFATGSSIMPQKKNPDVAELARGKSGRLIGDLTGFLATLKGLPLAYDRDLQEDKEPVFDAVDTLLLVLPALTGTVATMRVRRERLVAAAPDGFALATDVAEYLVRRGVPFRQAHEAVGQFVSWCVAHDVDLDEVSDDDLGMINPLLTPDVREVLSVRGALEARSAPGGTAPDRVREQIAALRPVLDRDQAWAVG.

This sequence belongs to the lyase 1 family. Argininosuccinate lyase subfamily.

It localises to the cytoplasm. The enzyme catalyses 2-(N(omega)-L-arginino)succinate = fumarate + L-arginine. Its pathway is amino-acid biosynthesis; L-arginine biosynthesis; L-arginine from L-ornithine and carbamoyl phosphate: step 3/3. The protein is Argininosuccinate lyase of Frankia casuarinae (strain DSM 45818 / CECT 9043 / HFP020203 / CcI3).